An 851-amino-acid polypeptide reads, in one-letter code: MAKTNISPGMQQYLDIKKDYPDAFLLFRMGDFYELFYEDAVKAAQLLEIGLTSRNKNAENPIPMAGVPHHSAQQYIDVLIELGYKVAVAEQMEDPKQAVGVVKREVVQVITPGTVVDSAKPDSANNFLVAVDFDGCRYGLAYMDVSTGEFCVTDLADFTSVRSEIQNLKAKEVLLGFDLSEEEQTILVKQMNLLLSYEETVYEDKSLIDGQLTTVELTAAGKLLQYVHKTQMRELSHLQALVHYEIKDYLQMSYATKSSLDLVENARTNKKHGSLYWLLDETKTAMGMRLLRSWIDRPLVSKEAILERQEIIQVFLNAFIERTDLSNSLKGVYDIERLSSRVSFGKANPKDLLQLGHTLAQVPYIKAILESFNSPCVDKLVNDIDSLPELEYLIRTAIDTDAPATISEGSIIRTGFDERLDHYRKVMREGTGWIADIEAKERQASGINNLKIDYNKKDGYYFHVTTSNLSLVPEHFFRKATLKNSERYGTAELAKIEGQMLEAREESSSLEYDIFMCIRAQVETYINRLQKLAKTLATVDVLQSLAVVAETNHYIRPQFNDNHMITIQEGRHAVVEKVMGVQEYIPNSISFDQQTSIQLITGPNMSGKSTYMRQLALTVIMAQMGSFVAADHVDLPLFDAIFTRIGAADDLISGQSTFMVEMMEANQAIKRASDNSLILFDELGRGTATYDGMALAQAIIEYIHDRVGAKTIFATHYHELTDLSTKLTSLVNVHVATLEKDGDVTFLHKIAEGPADKSYGIHVAKIAGLPKSLLKRADEVLIRLETQSRSTEIISVPSKVEPSSAAREGQLSLFPDEDKSQEIIHTLEAIDVMNMTPLQAMTTLYELKKLL.

602–609 (GPNMSGKS) contacts ATP.

Belongs to the DNA mismatch repair MutS family.

Functionally, this protein is involved in the repair of mismatches in DNA. It is possible that it carries out the mismatch recognition step. This protein has a weak ATPase activity. The protein is DNA mismatch repair protein MutS of Streptococcus pyogenes serotype M18 (strain MGAS8232).